Here is a 420-residue protein sequence, read N- to C-terminus: Sulfate adenylyltransferase (420 aa).

N-acetylalanine is present on alanine 2.

It belongs to the sulfate adenylyltransferase family. Mg(2+) serves as cofactor.

The enzyme catalyses sulfate + ATP + H(+) = adenosine 5'-phosphosulfate + diphosphate. The protein operates within sulfur metabolism; hydrogen sulfide biosynthesis; sulfite from sulfate: step 1/3. With respect to regulation, inhibited by adenosine 5'-phosphosulfate (APS), but not by 3'phosphoadenosine 5'-phosphosulfate (PAPS). Inhibited by AMP, ADP, CTP, GTP, ITP, UTP and anions other than those in group IV. In Pyropia yezoensis (Susabi-nori), this protein is Sulfate adenylyltransferase.